A 274-amino-acid chain; its full sequence is Putative ABC transporter ATP-binding protein alr3946 (274 aa).

The ABC transporter domain occupies L6–G242. Position 40–47 (G40–T47) interacts with ATP.

The protein belongs to the ABC transporter superfamily.

Its subcellular location is the cell inner membrane. Probably part of an ABC transporter complex. Responsible for energy coupling to the transport system. In Nostoc sp. (strain PCC 7120 / SAG 25.82 / UTEX 2576), this protein is Putative ABC transporter ATP-binding protein alr3946.